Here is a 201-residue protein sequence, read N- to C-terminus: 3-isopropylmalate dehydratase small subunit (201 aa).

The protein belongs to the LeuD family. LeuD type 1 subfamily. Heterodimer of LeuC and LeuD.

The enzyme catalyses (2R,3S)-3-isopropylmalate = (2S)-2-isopropylmalate. It participates in amino-acid biosynthesis; L-leucine biosynthesis; L-leucine from 3-methyl-2-oxobutanoate: step 2/4. Functionally, catalyzes the isomerization between 2-isopropylmalate and 3-isopropylmalate, via the formation of 2-isopropylmaleate. This is 3-isopropylmalate dehydratase small subunit from Rhodopseudomonas palustris (strain HaA2).